A 304-amino-acid polypeptide reads, in one-letter code: Xylanase inhibitor protein 1 (304 aa).

An N-terminal signal peptide occupies residues 1-29 (MVALGRRSWLVPLAMVLAVSSCLAGPAMA). The GH18 domain maps to 34-304 (GQMTVFWGRN…GYGKTVKYWA (271 aa)). Disulfide bonds link C53-C93 and C190-C219.

It belongs to the glycosyl hydrolase 18 family. Xylanase inhibitor subfamily. In terms of assembly, binds to fungal GH11 xylanases. In terms of tissue distribution, constitutively expressed in shoots.

The protein resides in the secreted. In terms of biological role, fungal xylanase inhibitor. Possesses competitive inhibiting activity against fungal endo-1,4-beta-D-xylanases belonging to glycoside hydrolase family 11 (GH11). May function in plant defense against secreted fungal pathogen xylanases. Is similar to class III chitinases, but does not exhibit chitinase activity. The protein is Xylanase inhibitor protein 1 of Oryza sativa subsp. japonica (Rice).